A 144-amino-acid chain; its full sequence is Putative pre-16S rRNA nuclease (144 aa).

The protein belongs to the YqgF nuclease family.

The protein localises to the cytoplasm. Its function is as follows. Could be a nuclease involved in processing of the 5'-end of pre-16S rRNA. The sequence is that of Putative pre-16S rRNA nuclease from Acaryochloris marina (strain MBIC 11017).